A 357-amino-acid chain; its full sequence is DNA primase small subunit PriS (357 aa).

Residues D105, D107, and D259 contribute to the active site.

It belongs to the eukaryotic-type primase small subunit family. In terms of assembly, heterodimer of a small subunit (PriS) and a large subunit (PriL). Mg(2+) is required as a cofactor. The cofactor is Mn(2+).

Its function is as follows. Catalytic subunit of DNA primase, an RNA polymerase that catalyzes the synthesis of short RNA molecules used as primers for DNA polymerase during DNA replication. The small subunit contains the primase catalytic core and has DNA synthesis activity on its own. Binding to the large subunit stabilizes and modulates the activity, increasing the rate of DNA synthesis while decreasing the length of the DNA fragments, and conferring RNA synthesis capability. The DNA polymerase activity may enable DNA primase to also catalyze primer extension after primer synthesis. May also play a role in DNA repair. In Methanococcus maripaludis (strain C6 / ATCC BAA-1332), this protein is DNA primase small subunit PriS.